Consider the following 132-residue polypeptide: MAAAKIKKGDTVLVVRGKEKGKQGKVLKVYERVKRRDKQGNPVYVRHFVIVEGVRLIKKHVKPIEGVREGGIIETEGPIDISNVMLICPNCNKPTRVGFRIVEEGNVRRKYRYCKKCNENIDLVSEKVIKGG.

Belongs to the universal ribosomal protein uL24 family. As to quaternary structure, part of the 50S ribosomal subunit.

Functionally, one of two assembly initiator proteins, it binds directly to the 5'-end of the 23S rRNA, where it nucleates assembly of the 50S subunit. In terms of biological role, one of the proteins that surrounds the polypeptide exit tunnel on the outside of the subunit. The protein is Large ribosomal subunit protein uL24 of Aquifex aeolicus (strain VF5).